We begin with the raw amino-acid sequence, 142 residues long: MAAMTVQLDIVSAESSIFSGLVAHLQVSGAEGDLGVMPGHAPLLTHIKPGMARIVKQDGKEEVFYLSGGILEVQPFSVSVLADVVLRAEEIDEQAAVEAKRRAEAHMANAGADFNYAAAAIELAQAIAQLRVVETIKKNIAR.

Belongs to the ATPase epsilon chain family. F-type ATPases have 2 components, CF(1) - the catalytic core - and CF(0) - the membrane proton channel. CF(1) has five subunits: alpha(3), beta(3), gamma(1), delta(1), epsilon(1). CF(0) has three main subunits: a, b and c.

It localises to the cell inner membrane. Produces ATP from ADP in the presence of a proton gradient across the membrane. In Shewanella loihica (strain ATCC BAA-1088 / PV-4), this protein is ATP synthase epsilon chain.